Reading from the N-terminus, the 349-residue chain is Nicotinate-nucleotide--dimethylbenzimidazole phosphoribosyltransferase (349 aa).

The Proton acceptor role is filled by E318.

The protein belongs to the CobT family.

It catalyses the reaction 5,6-dimethylbenzimidazole + nicotinate beta-D-ribonucleotide = alpha-ribazole 5'-phosphate + nicotinate + H(+). It participates in nucleoside biosynthesis; alpha-ribazole biosynthesis; alpha-ribazole from 5,6-dimethylbenzimidazole: step 1/2. Catalyzes the synthesis of alpha-ribazole-5'-phosphate from nicotinate mononucleotide (NAMN) and 5,6-dimethylbenzimidazole (DMB). The polypeptide is Nicotinate-nucleotide--dimethylbenzimidazole phosphoribosyltransferase (Geobacter sp. (strain M21)).